The primary structure comprises 308 residues: tRNA pseudouridine synthase B (308 aa).

The Nucleophile role is filled by D49.

Belongs to the pseudouridine synthase TruB family. Type 1 subfamily.

The enzyme catalyses uridine(55) in tRNA = pseudouridine(55) in tRNA. In terms of biological role, responsible for synthesis of pseudouridine from uracil-55 in the psi GC loop of transfer RNAs. The polypeptide is tRNA pseudouridine synthase B (Nitrosococcus oceani (strain ATCC 19707 / BCRC 17464 / JCM 30415 / NCIMB 11848 / C-107)).